A 101-amino-acid chain; its full sequence is ATP synthase subunit f, mitochondrial (101 aa).

Residues 1–6 (MIFKRA) constitute a mitochondrion transit peptide.

Belongs to the ATPase F chain family. As to quaternary structure, F-type ATPases have 2 components, CF(1) - the catalytic core - and CF(0) - the membrane proton channel. In yeast, the dimeric form of ATP synthase consists of 17 polypeptides: alpha, beta, gamma, delta, epsilon, 4 (B), 5 (OSCP), 6 (A), 8, 9 (C), d, E (Tim11), f, g, h, i/j and k.

It is found in the mitochondrion. The protein localises to the mitochondrion inner membrane. Mitochondrial membrane ATP synthase (F(1)F(0) ATP synthase or Complex V) produces ATP from ADP in the presence of a proton gradient across the membrane which is generated by electron transport complexes of the respiratory chain. F-type ATPases consist of two structural domains, F(1) - containing the extramembraneous catalytic core and F(0) - containing the membrane proton channel, linked together by a central stalk and a peripheral stalk. During catalysis, ATP synthesis in the catalytic domain of F(1) is coupled via a rotary mechanism of the central stalk subunits to proton translocation. Part of the complex F(0) domain. Minor subunit located with subunit a in the membrane. The protein is ATP synthase subunit f, mitochondrial (ATP17) of Saccharomyces cerevisiae (strain ATCC 204508 / S288c) (Baker's yeast).